Reading from the N-terminus, the 451-residue chain is Nicotinamide phosphoribosyltransferase (451 aa).

A diphosphate-binding site is contributed by arginine 209. Aspartate 232 is a binding site for beta-nicotinamide D-ribonucleotide. 2 residues coordinate diphosphate: histidine 248 and arginine 309. Beta-nicotinamide D-ribonucleotide is bound by residues 309–311 (RPD), 364–365 (GD), and arginine 403.

This sequence belongs to the NAPRTase family.

The catalysed reaction is beta-nicotinamide D-ribonucleotide + diphosphate = 5-phospho-alpha-D-ribose 1-diphosphate + nicotinamide + H(+). It participates in cofactor biosynthesis; NAD(+) biosynthesis; nicotinamide D-ribonucleotide from 5-phospho-alpha-D-ribose 1-diphosphate and nicotinamide: step 1/1. In terms of biological role, catalyzes the condensation of nicotinamide with 5-phosphoribosyl-1-pyrophosphate to yield nicotinamide mononucleotide, an intermediate in the biosynthesis of NAD. This is Nicotinamide phosphoribosyltransferase from Mycoplasma pneumoniae (strain ATCC 29342 / M129 / Subtype 1) (Mycoplasmoides pneumoniae).